We begin with the raw amino-acid sequence, 418 residues long: Putative ion-transport protein YfeO (418 aa).

A run of 11 helical transmembrane segments spans residues 9-31, 55-77, 90-112, 122-140, 147-169, 189-211, 223-244, 259-281, 301-323, 343-363, and 376-398; these read MLLL…IMVM, SPLW…IRFS, LIGA…LGLA, PIIT…RLLP, WTIL…AALI, PLMA…FSLP, ILSG…VWCL, FVLG…VSLF, YFLL…FRGG, VPAV…VLVV, and VVVP…WLLL.

It belongs to the chloride channel (TC 2.A.49) family.

Its subcellular location is the cell membrane. The polypeptide is Putative ion-transport protein YfeO (yfeO) (Escherichia coli O6:H1 (strain CFT073 / ATCC 700928 / UPEC)).